Here is a 217-residue protein sequence, read N- to C-terminus: ATP-dependent Clp protease proteolytic subunit (217 aa).

Ser-121 functions as the Nucleophile in the catalytic mechanism. Residue His-146 is part of the active site.

The protein belongs to the peptidase S14 family. As to quaternary structure, fourteen ClpP subunits assemble into 2 heptameric rings which stack back to back to give a disk-like structure with a central cavity, resembling the structure of eukaryotic proteasomes.

It is found in the cytoplasm. It catalyses the reaction Hydrolysis of proteins to small peptides in the presence of ATP and magnesium. alpha-casein is the usual test substrate. In the absence of ATP, only oligopeptides shorter than five residues are hydrolyzed (such as succinyl-Leu-Tyr-|-NHMec, and Leu-Tyr-Leu-|-Tyr-Trp, in which cleavage of the -Tyr-|-Leu- and -Tyr-|-Trp bonds also occurs).. Functionally, cleaves peptides in various proteins in a process that requires ATP hydrolysis. Has a chymotrypsin-like activity. Plays a major role in the degradation of misfolded proteins. This is ATP-dependent Clp protease proteolytic subunit from Burkholderia mallei (strain NCTC 10247).